Here is a 218-residue protein sequence, read N- to C-terminus: Large ribosomal subunit protein bL25 (218 aa).

The disordered stretch occupies residues 197–218; sequence PAEESGEKPVAHIEEKESTEKE. A compositionally biased stretch (basic and acidic residues) spans 201-218; sequence SGEKPVAHIEEKESTEKE.

This sequence belongs to the bacterial ribosomal protein bL25 family. CTC subfamily. As to quaternary structure, part of the 50S ribosomal subunit; part of the 5S rRNA/L5/L18/L25 subcomplex. Contacts the 5S rRNA. Binds to the 5S rRNA independently of L5 and L18.

Its function is as follows. This is one of the proteins that binds to the 5S RNA in the ribosome where it forms part of the central protuberance. This chain is Large ribosomal subunit protein bL25, found in Dehalococcoides mccartyi (strain ATCC BAA-2100 / JCM 16839 / KCTC 5957 / BAV1).